Reading from the N-terminus, the 173-residue chain is Co-chaperone protein HscB homolog (173 aa).

Residues 5–77 (CHYALFDLQP…PRRARYLLAI (73 aa)) form the J domain.

Belongs to the HscB family. Interacts with HscA and stimulates its ATPase activity.

Functionally, co-chaperone involved in the maturation of iron-sulfur cluster-containing proteins. Seems to help targeting proteins to be folded toward HscA. This chain is Co-chaperone protein HscB homolog, found in Pseudomonas entomophila (strain L48).